The following is a 208-amino-acid chain: Protein-L-isoaspartate O-methyltransferase (208 aa).

Ser59 is an active-site residue.

The protein belongs to the methyltransferase superfamily. L-isoaspartyl/D-aspartyl protein methyltransferase family.

The protein resides in the cytoplasm. It carries out the reaction [protein]-L-isoaspartate + S-adenosyl-L-methionine = [protein]-L-isoaspartate alpha-methyl ester + S-adenosyl-L-homocysteine. Catalyzes the methyl esterification of L-isoaspartyl residues in peptides and proteins that result from spontaneous decomposition of normal L-aspartyl and L-asparaginyl residues. It plays a role in the repair and/or degradation of damaged proteins. The protein is Protein-L-isoaspartate O-methyltransferase of Erwinia tasmaniensis (strain DSM 17950 / CFBP 7177 / CIP 109463 / NCPPB 4357 / Et1/99).